A 4753-amino-acid polypeptide reads, in one-letter code: Dynein heavy chain domain-containing protein 1 (4753 aa).

2 coiled-coil regions span residues 826–858 and 936–991; these read IHAI…ALHE and KLQQ…LSEL. The tract at residues 2688-2766 is disordered; sequence HLGKDHQESE…SRGMKESISH (79 aa). The segment covering 2695–2712 has biased composition (acidic residues); sequence ESEEEEEEERVPEVESEG. The span at 2740–2751 shows a compositional bias: polar residues; it reads RVSNSRDPSLTP. Coiled coils occupy residues 3125–3227, 3590–3651, and 4431–4460; these read LQQQ…MSKA, MRNQ…QGSK, and GAQL…LTHV. The segment at 3580 to 3657 is disordered; that stretch reads ALTEGRGKGL…QGSKPAYETQ (78 aa). Residues 3602–3615 are compositionally biased toward acidic residues; the sequence is KEEDDESEESNEAE. A compositionally biased stretch (basic and acidic residues) spans 3616–3631; that stretch reads DQTKEQKAEERKNEQE. Acidic residues predominate over residues 3632–3641; that stretch reads KEQEENEEKE. Residues 4669-4697 form a disordered region; it reads ALQDSPSSQPSPLPPVSISTQAPGTSDLP.

Belongs to the dynein heavy chain family. Expressed in spermatozoa (at protein level).

The protein localises to the cell projection. The protein resides in the cilium. It is found in the flagellum. Functionally, essential for the normal assembly and function of sperm flagella axonemes. The sequence is that of Dynein heavy chain domain-containing protein 1 (DNHD1) from Homo sapiens (Human).